Reading from the N-terminus, the 710-residue chain is Polyribonucleotide nucleotidyltransferase (710 aa).

Mg(2+)-binding residues include D487 and D493. Positions 554-613 (PRIHTMKISAEKIKDVIGKGGAVIRALTEETGTTIEIEDDGTIKIAATEGAAAKEAIRRI) constitute a KH domain. An S1 motif domain is found at 623–691 (GRIYTGKVAR…RQGRVRLSMK (69 aa)). Positions 691 to 710 (KEAVEKPAEEANDASEAKGE) are disordered.

This sequence belongs to the polyribonucleotide nucleotidyltransferase family. As to quaternary structure, component of the RNA degradosome, which is a multiprotein complex involved in RNA processing and mRNA degradation. Requires Mg(2+) as cofactor.

The protein localises to the cytoplasm. The enzyme catalyses RNA(n+1) + phosphate = RNA(n) + a ribonucleoside 5'-diphosphate. Its function is as follows. Involved in mRNA degradation. Catalyzes the phosphorolysis of single-stranded polyribonucleotides processively in the 3'- to 5'-direction. The sequence is that of Polyribonucleotide nucleotidyltransferase from Vibrio campbellii (strain ATCC BAA-1116).